Consider the following 270-residue polypeptide: Putative pyruvate, phosphate dikinase regulatory protein (270 aa).

ADP is bound at residue 149-156 (GVSRTSKT).

The protein belongs to the pyruvate, phosphate/water dikinase regulatory protein family. PDRP subfamily.

It carries out the reaction N(tele)-phospho-L-histidyl/L-threonyl-[pyruvate, phosphate dikinase] + ADP = N(tele)-phospho-L-histidyl/O-phospho-L-threonyl-[pyruvate, phosphate dikinase] + AMP + H(+). It catalyses the reaction N(tele)-phospho-L-histidyl/O-phospho-L-threonyl-[pyruvate, phosphate dikinase] + phosphate + H(+) = N(tele)-phospho-L-histidyl/L-threonyl-[pyruvate, phosphate dikinase] + diphosphate. Its function is as follows. Bifunctional serine/threonine kinase and phosphorylase involved in the regulation of the pyruvate, phosphate dikinase (PPDK) by catalyzing its phosphorylation/dephosphorylation. The chain is Putative pyruvate, phosphate dikinase regulatory protein from Sphingopyxis alaskensis (strain DSM 13593 / LMG 18877 / RB2256) (Sphingomonas alaskensis).